A 109-amino-acid chain; its full sequence is Large ribosomal subunit protein uL24 (109 aa).

It belongs to the universal ribosomal protein uL24 family. In terms of assembly, part of the 50S ribosomal subunit.

In terms of biological role, one of two assembly initiator proteins, it binds directly to the 5'-end of the 23S rRNA, where it nucleates assembly of the 50S subunit. One of the proteins that surrounds the polypeptide exit tunnel on the outside of the subunit. The chain is Large ribosomal subunit protein uL24 from Hamiltonella defensa subsp. Acyrthosiphon pisum (strain 5AT).